Consider the following 247-residue polypeptide: Agamous-like MADS-box protein FUL-L (247 aa).

In terms of domain architecture, MADS-box spans 1–61 (MGRGRVQLKR…GKLFEYSSDS (61 aa)). Residues 88-178 (QGNWSMDYPK…AKKVKEKEKV (91 aa)) enclose the K-box domain. The segment at 224–247 (EDGAEARPSPNTLMPPWMLRHVNE) is disordered.

As to expression, expressed in tendrils and flowers.

It is found in the nucleus. Its function is as follows. Probable transcription factor involved in flower development. This is Agamous-like MADS-box protein FUL-L from Vitis vinifera (Grape).